Consider the following 415-residue polypeptide: Probable G-protein coupled receptor 19 (415 aa).

Over 1–69 the chain is Extracellular; it reads MVFAHRMDNS…LKPGEVATAS (69 aa). Residues Asn25 and Asn52 are each glycosylated (N-linked (GlcNAc...) asparagine). A helical transmembrane segment spans residues 70–90; sequence IFFGILWLFSIFGNSLVCLVI. Topologically, residues 91–102 are cytoplasmic; sequence HRSRRTQSTTNY. A helical transmembrane segment spans residues 103–123; sequence FVVSMACADLLISVASTPFVL. The Extracellular portion of the chain corresponds to 124 to 143; it reads LQFTTGRWTLGSATCKVVRY. A disulfide bridge connects residues Cys138 and Cys210. A helical transmembrane segment spans residues 144–161; the sequence is FQYLTPGVQIYVLLSICI. At 162-182 the chain is on the cytoplasmic side; that stretch reads DRFYTIVYPLSFKVSREKAKK. A helical transmembrane segment spans residues 183–203; sequence MIAASWVFDAGFVTPVLFFYG. The Extracellular portion of the chain corresponds to 204–221; the sequence is SNWDSHCNYFLPSSWEGT. The chain crosses the membrane as a helical span at residues 222-242; sequence AYTVIHFLVGFVIPSVLIILF. The Cytoplasmic portion of the chain corresponds to 243 to 277; it reads YQKVIKYIWRIGTDGRTVRRTMNIVPRTKVKTIKM. The helical transmembrane segment at 278–298 threads the bilayer; the sequence is FLILNLLFLLSWLPFHVAQLW. Over 299 to 309 the chain is Extracellular; it reads HPHEQDYKKSS. The chain crosses the membrane as a helical span at residues 310–325; sequence LVFTAITWISFSSSAS. At 326–415 the chain is on the cytoplasmic side; that stretch reads KPTLYSIYNA…INSNPPNTFV (90 aa).

Belongs to the G-protein coupled receptor 1 family. As to expression, abundant expression in the brain.

The protein localises to the cell membrane. In terms of biological role, G-protein coupled receptor that plays a role in the regulation of circadian rhythms and energy metabolism. Participates in maintaining proper circadian gene expression in the suprachiasmatic nucleus (SCN), the locus of the master circadian clock in the brain. May function as a coordinator of aging-associated metabolic dysfunction, stress response, DNA integrity management, and eventual senescence. Upon binding to adropin, modulates mitochondrial energy metabolism via the p44/42-PDK4 signaling pathway, influencing pyruvate dehydrogenase activity. The polypeptide is Probable G-protein coupled receptor 19 (GPR19) (Homo sapiens (Human)).